Reading from the N-terminus, the 1511-residue chain is Pleiotropic ABC efflux transporter of multiple drugs (1511 aa).

Residues 1–14 are compositionally biased toward polar residues; that stretch reads MPEAKLNNNVNDVT. The tract at residues 1–32 is disordered; that stretch reads MPEAKLNNNVNDVTSYSSASSSTENAADLHNY. At 1 to 517 the chain is on the cytoplasmic side; that stretch reads MPEAKLNNNV…LLIRNMWRLR (517 aa). The residue at position 22 (Ser-22) is a Phosphoserine. 2 positions are modified to phosphothreonine: Thr-49 and Thr-51. Positions 52 to 71 are disordered; it reads AQSMQNSTQSAPNKSDAQSI. Phosphoserine is present on residues Ser-54, Ser-58, and Ser-61. In terms of domain architecture, ABC transporter 1 spans 161-410; that stretch reads LRKFQRSKET…FEDMGYVCPS (250 aa). A helical membrane pass occupies residues 518 to 542; it reads NNIGFTLFMILGNCSMALILGSMFF. Topologically, residues 543–558 are extracellular; that stretch reads KIMKKGDTSTFYFRGS. The chain crosses the membrane as a helical span at residues 559–579; the sequence is AMFFAILFNAFSSLLEIFSLY. At 580–611 the chain is on the cytoplasmic side; the sequence is EARPITEKHRTYSLYHPSADAFASVLSEIPSK. A helical transmembrane segment spans residues 612–628; sequence LIIAVCFNIIFYFLVDF. The Extracellular segment spans residues 629 to 631; sequence RRN. Residues 632–650 traverse the membrane as a helical segment; it reads GGVFFFYLLINIVAVFSMS. At 651–665 the chain is on the cytoplasmic side; that stretch reads HLFRCVGSLTKTLSE. A helical transmembrane segment spans residues 666–685; it reads AMVPASMLLLALSMYTGFAI. The Extracellular segment spans residues 686-774; it reads PKKKILRWSK…QYYHKDKWRG (89 aa). N-linked (GlcNAc...) asparagine glycosylation is present at Asn-734. The helical transmembrane segment at 775–793 threads the bilayer; it reads FGIGMAYVVFFFFVYLFLC. At 794–1237 the chain is on the cytoplasmic side; sequence EYNEGAKQKG…GTSLQGLQNQ (444 aa). Residues 824 to 858 are disordered; sequence EKNANDPENVGERSDLSSDRKMLQESSEEESDTYG. A Glycyl lysine isopeptide (Lys-Gly) (interchain with G-Cter in ubiquitin) cross-link involves residue Lys-825. The span at 833–846 shows a compositional bias: basic and acidic residues; that stretch reads VGERSDLSSDRKML. Residues Ser-837, Ser-840, Ser-841, Ser-849, Ser-850, and Ser-854 each carry the phosphoserine modification. In terms of domain architecture, ABC transporter 2 spans 869–1112; the sequence is FHWRNLCYEV…MIDYFESHGA (244 aa). Residue 905 to 912 participates in ATP binding; it reads GASGAGKT. The helical transmembrane segment at 1238-1260 threads the bilayer; that stretch reads MLAVFMFTVIFNPILQQYLPSFV. Residues 1261–1291 lie on the Extracellular side of the membrane; that stretch reads QQRDLYEARERPSRTFSWISFIFAQIFVEVP. A helical membrane pass occupies residues 1292 to 1313; that stretch reads WNILAGTIAYFIYYYPIGFYSN. The Cytoplasmic portion of the chain corresponds to 1314–1324; it reads ASAAGQLHERG. Residues 1325 to 1349 traverse the membrane as a helical segment; it reads ALFWLFSCAFYVYVGSMGLLVISFN. Topologically, residues 1350–1354 are extracellular; that stretch reads QVAES. The chain crosses the membrane as a helical span at residues 1355–1379; the sequence is AANLASLLFTMSLSFCGVMTTPSAM. Over 1380–1388 the chain is Cytoplasmic; that stretch reads PRFWIFMYR. The helical transmembrane segment at 1389 to 1407 threads the bilayer; the sequence is VSPLTYFIQALLAVGVANV. At 1408-1476 the chain is on the extracellular side; the sequence is DVKCADYELL…VNSFYSERWR (69 aa). N-linked (GlcNAc...) asparagine glycosylation occurs at Asn-1447. Residues 1477–1499 form a helical membrane-spanning segment; sequence NYGIFICYIAFNYIAGVFFYWLA. Residues 1500-1511 are Cytoplasmic-facing; that stretch reads RVPKKNGKLSKK.

The protein belongs to the ABC transporter superfamily. ABCG family. PDR (TC 3.A.1.205) subfamily. In terms of processing, ubiquitinylation mediates endocytosis and vacuolar degradation. Phosphorylation by casein kinase I stabilizes the protein half-life.

The protein resides in the cell membrane. With respect to regulation, FK506, isonitrile, enniatin, RU49953, kitasatospora E420, staurosporine CGP42700, prenyl-flavonoids, D-octapeptides were found to be inhibitors in vivo. Vanadate and oligomycin were found to be inhibitors in vitro. Active efflux of weakly charged organic compounds of 90 cubic Angstroms to 300 cubic Angstroms surface volume. Confers resistance to numerous chemicals including cycloheximide, sulfomethuron methyl, steroids, antiseptics, antibiotics, anticancer, herbicides, mycotoxins, insecticides, ionophores, alkaloids, flavonoids, phenothiazines, organotin compounds, carbazoles, lysosomotropic aminoesters, detergents, rhodamines and other fluorophores, azoles and other antifungals. Exhibits nucleoside triphosphatase activity. The sequence is that of Pleiotropic ABC efflux transporter of multiple drugs (PDR5) from Saccharomyces cerevisiae (strain ATCC 204508 / S288c) (Baker's yeast).